The chain runs to 326 residues: tRNA-modifying protein YgfZ (326 aa).

The folate site is built by tryptophan 27 and tryptophan 189.

It belongs to the tRNA-modifying YgfZ family.

Its subcellular location is the cytoplasm. In terms of biological role, folate-binding protein involved in regulating the level of ATP-DnaA and in the modification of some tRNAs. It is probably a key factor in regulatory networks that act via tRNA modification, such as initiation of chromosomal replication. The polypeptide is tRNA-modifying protein YgfZ (Salmonella paratyphi A (strain AKU_12601)).